Reading from the N-terminus, the 317-residue chain is Acetylglutamate kinase (317 aa).

Substrate contacts are provided by residues 70-71, R92, and N191; that span reads GG.

The protein belongs to the acetylglutamate kinase family. ArgB subfamily.

It is found in the cytoplasm. It catalyses the reaction N-acetyl-L-glutamate + ATP = N-acetyl-L-glutamyl 5-phosphate + ADP. Its pathway is amino-acid biosynthesis; L-arginine biosynthesis; N(2)-acetyl-L-ornithine from L-glutamate: step 2/4. Functionally, catalyzes the ATP-dependent phosphorylation of N-acetyl-L-glutamate. In Corynebacterium glutamicum (strain R), this protein is Acetylglutamate kinase.